A 334-amino-acid polypeptide reads, in one-letter code: Methionyl-tRNA formyltransferase (334 aa).

111–114 is a (6S)-5,6,7,8-tetrahydrofolate binding site; it reads SLLP.

The protein belongs to the Fmt family.

The catalysed reaction is L-methionyl-tRNA(fMet) + (6R)-10-formyltetrahydrofolate = N-formyl-L-methionyl-tRNA(fMet) + (6S)-5,6,7,8-tetrahydrofolate + H(+). In terms of biological role, attaches a formyl group to the free amino group of methionyl-tRNA(fMet). The formyl group appears to play a dual role in the initiator identity of N-formylmethionyl-tRNA by promoting its recognition by IF2 and preventing the misappropriation of this tRNA by the elongation apparatus. This is Methionyl-tRNA formyltransferase from Cyanothece sp. (strain PCC 7425 / ATCC 29141).